The primary structure comprises 321 residues: MNKPVKMEPGVKLRDAAKMALIPVKVLPTEKNEMLRKPEWLKIRLPKSTERIEGIKQAMRKHGLHSVCEEASCPNLSECFNHGTATFMILGAICTRRCPFCDVAHGRPLTPDATEPEKLALTIKDMKLSYVVITSVDRDDLRDGGAQHFADCIREIRKHSPNITIEILVPDFRGRMDRALEILIETPPDVFNHNLETAPRLYKLARPGADYKWSLELLRRFKEAHPEIKTKSGLMVGLGEEISEIEEVLRDLRAHNVDMLTVGQYLQPSKHHLPVKRYVPPAEFDALKAYADEIGFTHAASGPFVRSSYHADQQAAGKEVK.

Cysteine 68, cysteine 73, cysteine 79, cysteine 94, cysteine 98, cysteine 101, and serine 308 together coordinate [4Fe-4S] cluster. The Radical SAM core domain occupies 80-297; sequence FNHGTATFMI…KAYADEIGFT (218 aa).

It belongs to the radical SAM superfamily. Lipoyl synthase family. [4Fe-4S] cluster is required as a cofactor.

It is found in the cytoplasm. The enzyme catalyses [[Fe-S] cluster scaffold protein carrying a second [4Fe-4S](2+) cluster] + N(6)-octanoyl-L-lysyl-[protein] + 2 oxidized [2Fe-2S]-[ferredoxin] + 2 S-adenosyl-L-methionine + 4 H(+) = [[Fe-S] cluster scaffold protein] + N(6)-[(R)-dihydrolipoyl]-L-lysyl-[protein] + 4 Fe(3+) + 2 hydrogen sulfide + 2 5'-deoxyadenosine + 2 L-methionine + 2 reduced [2Fe-2S]-[ferredoxin]. It functions in the pathway protein modification; protein lipoylation via endogenous pathway; protein N(6)-(lipoyl)lysine from octanoyl-[acyl-carrier-protein]: step 2/2. In terms of biological role, catalyzes the radical-mediated insertion of two sulfur atoms into the C-6 and C-8 positions of the octanoyl moiety bound to the lipoyl domains of lipoate-dependent enzymes, thereby converting the octanoylated domains into lipoylated derivatives. The protein is Lipoyl synthase of Pseudoalteromonas translucida (strain TAC 125).